A 323-amino-acid polypeptide reads, in one-letter code: 1D-myo-inositol 2-acetamido-2-deoxy-alpha-D-glucopyranoside deacetylase (323 aa).

Positions 28, 31, and 163 each coordinate Zn(2+).

The protein belongs to the MshB deacetylase family. Zn(2+) is required as a cofactor.

It carries out the reaction 1D-myo-inositol 2-acetamido-2-deoxy-alpha-D-glucopyranoside + H2O = 1D-myo-inositol 2-amino-2-deoxy-alpha-D-glucopyranoside + acetate. Catalyzes the deacetylation of 1D-myo-inositol 2-acetamido-2-deoxy-alpha-D-glucopyranoside (GlcNAc-Ins) in the mycothiol biosynthesis pathway. This chain is 1D-myo-inositol 2-acetamido-2-deoxy-alpha-D-glucopyranoside deacetylase, found in Streptomyces scabiei (strain 87.22).